We begin with the raw amino-acid sequence, 873 residues long: Valine--tRNA ligase (873 aa).

Positions 46-56 match the 'HIGH' region motif; sequence PNVTGKLHIGH. The 'KMSKS' region signature appears at 525–529; the sequence is KMSKS. Residue lysine 528 coordinates ATP. Residues 804–873 adopt a coiled-coil conformation; it reads NDDFIDKEKM…ELIQDKLNKM (70 aa).

Belongs to the class-I aminoacyl-tRNA synthetase family. ValS type 1 subfamily. In terms of assembly, monomer.

It localises to the cytoplasm. It carries out the reaction tRNA(Val) + L-valine + ATP = L-valyl-tRNA(Val) + AMP + diphosphate. Catalyzes the attachment of valine to tRNA(Val). As ValRS can inadvertently accommodate and process structurally similar amino acids such as threonine, to avoid such errors, it has a 'posttransfer' editing activity that hydrolyzes mischarged Thr-tRNA(Val) in a tRNA-dependent manner. In Mesoplasma florum (strain ATCC 33453 / NBRC 100688 / NCTC 11704 / L1) (Acholeplasma florum), this protein is Valine--tRNA ligase.